A 96-amino-acid polypeptide reads, in one-letter code: Small ribosomal subunit protein bS18 (96 aa).

The protein belongs to the bacterial ribosomal protein bS18 family. In terms of assembly, part of the 30S ribosomal subunit. Forms a tight heterodimer with protein bS6.

Its function is as follows. Binds as a heterodimer with protein bS6 to the central domain of the 16S rRNA, where it helps stabilize the platform of the 30S subunit. This chain is Small ribosomal subunit protein bS18, found in Gluconobacter oxydans (strain 621H) (Gluconobacter suboxydans).